We begin with the raw amino-acid sequence, 491 residues long: Nucleoside transporter 1.2 (491 aa).

6 helical membrane-spanning segments follow: residues 27 to 47 (FYVYVVAFMCGVSMMMSVNAV), 82 to 102 (YNLIGIVTSLIMEPLTLLSWF), 109 to 129 (VRLLGGLVILIVEIIVLMVVP), 136 to 156 (AGAVATICCTGFIGGFGKSIF), 173 to 193 (STMMGGVGMSGVLTSLLQIIV), and 209 to 229 (KIYYGLDVGIQGMTFVALILL). The segment covering 261–273 (HTDEHPTHDKEGR) has biased composition (basic and acidic residues). 2 disordered regions span residues 261–280 (HTDEHPTHDKEGRNSSSGKE) and 290–309 (AAAKSEGPDAVEESSWPHEV). N-linked (GlcNAc...) asparagine glycosylation is present at N274. 5 helical membrane-spanning segments follow: residues 333–353 (MFVACAFNFLITLFLFPGIAV), 361–381 (WFSTIAVFIFNVFDVLGRFSP), 395–415 (WIIVAASFARVIFVPLLLLHS), 427–447 (VMEVIFGFSNGYVGSMALVLG), and 460–480 (FVAGTLMGISILVGGTIGTVL).

This sequence belongs to the SLC29A/ENT transporter (TC 2.A.57) family.

The protein resides in the membrane. It catalyses the reaction adenosine(in) + H(+)(in) = adenosine(out) + H(+)(out). It carries out the reaction uridine(in) + H(+)(in) = uridine(out) + H(+)(out). Functionally, sodium-independent nucleoside:H(+) symporter; transports adenosine with high affinity and uridine with moderate affinity. Can transport cytidine and thymidine. This chain is Nucleoside transporter 1.2, found in Leishmania donovani.